Consider the following 269-residue polypeptide: Shikimate dehydrogenase (NADP(+)) (269 aa).

Shikimate is bound by residues 13–15 and Thr-60; that span reads SLS. Lys-64 (proton acceptor) is an active-site residue. Glu-76 contributes to the NADP(+) binding site. Residues Asn-85 and Asp-100 each contribute to the shikimate site. NADP(+) contacts are provided by residues 124-128, 148-153, and Ile-209; these read GAGGA and NRTMSR. A shikimate-binding site is contributed by Tyr-211. Residue Gly-232 coordinates NADP(+). Gln-239 contacts shikimate.

It belongs to the shikimate dehydrogenase family. Monomer or homodimer.

The enzyme catalyses shikimate + NADP(+) = 3-dehydroshikimate + NADPH + H(+). Its pathway is metabolic intermediate biosynthesis; chorismate biosynthesis; chorismate from D-erythrose 4-phosphate and phosphoenolpyruvate: step 4/7. Involved in the biosynthesis of the chorismate, which leads to the biosynthesis of aromatic amino acids. Catalyzes the reversible NADPH linked reduction of 3-dehydroshikimate (DHSA) to yield shikimate (SA). It can also use NAD to oxidize shikimate. This chain is Shikimate dehydrogenase (NADP(+)), found in Staphylococcus epidermidis (strain ATCC 35984 / DSM 28319 / BCRC 17069 / CCUG 31568 / BM 3577 / RP62A).